The primary structure comprises 1022 residues: Polyamine-modulated factor 1-binding protein 1 (1022 aa).

Coiled-coil stretches lie at residues 89 to 121 (NKQY…LQAS), 169 to 281 (EKLH…ACSN), 312 to 377 (SEDC…LREE), 411 to 732 (LKKD…SAIQ), and 758 to 968 (QDDL…KAGN). 2 stretches are compositionally biased toward basic and acidic residues: residues 545-556 (QKESSKIEEERK) and 571-582 (EGQRRLSNAEKE). The tract at residues 545-582 (QKESSKIEEERKHNRQRLQELSSELSEGQRRLSNAEKE) is disordered.

As to expression, expressed in the testis.

The protein resides in the cell projection. It is found in the cilium. It localises to the flagellum. Functionally, required for normal spermatogenesis. It functions as a scaffold protein that attaches the sperm head-tail connecting piece to the nuclear envelope, thus maintaining sperm head and tail integrity. May also be involved in the general organization of cellular cytoskeleton. The chain is Polyamine-modulated factor 1-binding protein 1 (Pmfbp1) from Mus musculus (Mouse).